Reading from the N-terminus, the 198-residue chain is Putative peptidyl-prolyl cis-trans isomerase (198 aa).

The PPIase cyclophilin-type domain maps to 14 to 195; sequence NEIKVAMHTN…HDVVIESIDV (182 aa).

It belongs to the cyclophilin-type PPIase family.

It catalyses the reaction [protein]-peptidylproline (omega=180) = [protein]-peptidylproline (omega=0). Functionally, PPIases accelerate the folding of proteins. It catalyzes the cis-trans isomerization of proline imidic peptide bonds in oligopeptides. In Staphylococcus haemolyticus (strain JCSC1435), this protein is Putative peptidyl-prolyl cis-trans isomerase.